The following is a 212-amino-acid chain: Putative 3-methyladenine DNA glycosylase (212 aa).

Belongs to the DNA glycosylase MPG family.

In Psychrobacter cryohalolentis (strain ATCC BAA-1226 / DSM 17306 / VKM B-2378 / K5), this protein is Putative 3-methyladenine DNA glycosylase.